The sequence spans 526 residues: Bifunctional purine biosynthesis protein PurH (526 aa).

Positions 1–145 constitute an MGS-like domain; the sequence is MIRTALLSVS…KNHQDVTVLI (145 aa).

Belongs to the PurH family.

The enzyme catalyses (6R)-10-formyltetrahydrofolate + 5-amino-1-(5-phospho-beta-D-ribosyl)imidazole-4-carboxamide = 5-formamido-1-(5-phospho-D-ribosyl)imidazole-4-carboxamide + (6S)-5,6,7,8-tetrahydrofolate. It catalyses the reaction IMP + H2O = 5-formamido-1-(5-phospho-D-ribosyl)imidazole-4-carboxamide. Its pathway is purine metabolism; IMP biosynthesis via de novo pathway; 5-formamido-1-(5-phospho-D-ribosyl)imidazole-4-carboxamide from 5-amino-1-(5-phospho-D-ribosyl)imidazole-4-carboxamide (10-formyl THF route): step 1/1. It functions in the pathway purine metabolism; IMP biosynthesis via de novo pathway; IMP from 5-formamido-1-(5-phospho-D-ribosyl)imidazole-4-carboxamide: step 1/1. The chain is Bifunctional purine biosynthesis protein PurH from Polynucleobacter necessarius subsp. necessarius (strain STIR1).